Consider the following 234-residue polypeptide: Leucyl/phenylalanyl-tRNA--protein transferase (234 aa).

The protein belongs to the L/F-transferase family.

The protein localises to the cytoplasm. The catalysed reaction is N-terminal L-lysyl-[protein] + L-leucyl-tRNA(Leu) = N-terminal L-leucyl-L-lysyl-[protein] + tRNA(Leu) + H(+). It carries out the reaction N-terminal L-arginyl-[protein] + L-leucyl-tRNA(Leu) = N-terminal L-leucyl-L-arginyl-[protein] + tRNA(Leu) + H(+). It catalyses the reaction L-phenylalanyl-tRNA(Phe) + an N-terminal L-alpha-aminoacyl-[protein] = an N-terminal L-phenylalanyl-L-alpha-aminoacyl-[protein] + tRNA(Phe). Its function is as follows. Functions in the N-end rule pathway of protein degradation where it conjugates Leu, Phe and, less efficiently, Met from aminoacyl-tRNAs to the N-termini of proteins containing an N-terminal arginine or lysine. In Pectobacterium carotovorum subsp. carotovorum (strain PC1), this protein is Leucyl/phenylalanyl-tRNA--protein transferase.